Consider the following 333-residue polypeptide: Phosphate acyltransferase (333 aa).

It belongs to the PlsX family. Homodimer. Probably interacts with PlsY.

The protein localises to the cytoplasm. It catalyses the reaction a fatty acyl-[ACP] + phosphate = an acyl phosphate + holo-[ACP]. It functions in the pathway lipid metabolism; phospholipid metabolism. In terms of biological role, catalyzes the reversible formation of acyl-phosphate (acyl-PO(4)) from acyl-[acyl-carrier-protein] (acyl-ACP). This enzyme utilizes acyl-ACP as fatty acyl donor, but not acyl-CoA. This Ligilactobacillus salivarius (strain UCC118) (Lactobacillus salivarius) protein is Phosphate acyltransferase.